The chain runs to 477 residues: Iroquois homeobox protein 6a (477 aa).

The segment at residues 148-210 (GSTRRKNATR…NARRRLKKEN (63 aa)) is a DNA-binding region (homeobox). 2 disordered regions span residues 209–282 (ENKM…PDIP) and 303–323 (DYLD…QSTS). Residues 219–237 (KAGDDRKEDLDSKDSKDEQ) are compositionally biased toward basic and acidic residues. Residues 243–253 (DLDDMEDEDCD) are compositionally biased toward acidic residues. The segment covering 254-264 (KLDSDCEKSGQ) has biased composition (basic and acidic residues). Residues 310-321 (SKPQQQQPSPQS) are compositionally biased toward low complexity.

It belongs to the TALE/IRO homeobox family.

It is found in the nucleus. Transcription factor. Binds to the iroquois binding site (IBS) motif of target genes to regulate gene expression; functions as a transcriptional activator or repressor. In concert with irx5a, plays a role in visual performance. This chain is Iroquois homeobox protein 6a, found in Danio rerio (Zebrafish).